The sequence spans 638 residues: ATP-dependent zinc metalloprotease FtsH (638 aa).

Topologically, residues 1–7 (MRSTYKT) are cytoplasmic. Residues 8–28 (IGLWVILIVLFVAFYNFFSQG) form a helical membrane-spanning segment. The Periplasmic portion of the chain corresponds to 29-102 (NDQVQEPSFT…KYEREEQNSL (74 aa)). A helical membrane pass occupies residues 103–123 (WLTILGQWMPVVFLFLFFIFF). Over 124–638 (MRQLQGGSGK…GLPAMEPKKA (515 aa)) the chain is Cytoplasmic. 195-202 (GSPGTGKT) serves as a coordination point for ATP. His-417 contributes to the Zn(2+) binding site. Glu-418 is an active-site residue. The Zn(2+) site is built by His-421 and Asp-493. Residues 596–638 (GGQLTRERPPPRVNAPPKATEKKDKRKILDALEGLPAMEPKKA) form a disordered region. Positions 614-625 (ATEKKDKRKILD) are enriched in basic and acidic residues.

It in the central section; belongs to the AAA ATPase family. The protein in the C-terminal section; belongs to the peptidase M41 family. Homohexamer. It depends on Zn(2+) as a cofactor.

Its subcellular location is the cell inner membrane. Acts as a processive, ATP-dependent zinc metallopeptidase for both cytoplasmic and membrane proteins. Plays a role in the quality control of integral membrane proteins. The sequence is that of ATP-dependent zinc metalloprotease FtsH from Myxococcus xanthus (strain DK1622).